The primary structure comprises 105 residues: Nitrogenase-stabilizing/protective protein NifW 1 (105 aa).

This sequence belongs to the NifW family. In terms of assembly, homotrimer; associates with NifD.

May protect the nitrogenase Fe-Mo protein from oxidative damage. In Trichormus variabilis (strain ATCC 29413 / PCC 7937) (Anabaena variabilis), this protein is Nitrogenase-stabilizing/protective protein NifW 1.